We begin with the raw amino-acid sequence, 301 residues long: Protoheme IX farnesyltransferase 1 (301 aa).

9 consecutive transmembrane segments (helical) span residues 29–49, 51–71, 101–121, 123–143, 150–170, 177–197, 223–243, 244–264, and 275–295; these read VVAL…PHAV, VQPL…AAAL, ALIF…SLVN, LTAW…TAYL, NIVI…TAVT, ALLL…ALAI, CILL…LVGM, CGPV…YKAW, and AMQV…ALLL.

It belongs to the UbiA prenyltransferase family. Protoheme IX farnesyltransferase subfamily.

It localises to the cell inner membrane. The catalysed reaction is heme b + (2E,6E)-farnesyl diphosphate + H2O = Fe(II)-heme o + diphosphate. The protein operates within porphyrin-containing compound metabolism; heme O biosynthesis; heme O from protoheme: step 1/1. Its function is as follows. Converts heme B (protoheme IX) to heme O by substitution of the vinyl group on carbon 2 of heme B porphyrin ring with a hydroxyethyl farnesyl side group. This chain is Protoheme IX farnesyltransferase 1, found in Shewanella baltica (strain OS185).